The sequence spans 341 residues: Ribosomal RNA small subunit methyltransferase H (341 aa).

S-adenosyl-L-methionine-binding positions include 47 to 49, Asp-64, Phe-91, Asp-109, and Gln-116; that span reads GGY. The tract at residues 292 to 318 is disordered; it reads VAASEDEASRNPRARSAKLRAGVRTPA.

Belongs to the methyltransferase superfamily. RsmH family.

The protein localises to the cytoplasm. It catalyses the reaction cytidine(1402) in 16S rRNA + S-adenosyl-L-methionine = N(4)-methylcytidine(1402) in 16S rRNA + S-adenosyl-L-homocysteine + H(+). In terms of biological role, specifically methylates the N4 position of cytidine in position 1402 (C1402) of 16S rRNA. The sequence is that of Ribosomal RNA small subunit methyltransferase H from Sinorhizobium fredii (strain NBRC 101917 / NGR234).